A 318-amino-acid polypeptide reads, in one-letter code: 2-desacetyl-2-hydroxyethyl bacteriochlorophyllide A dehydrogenase (318 aa).

It functions in the pathway porphyrin-containing compound metabolism; bacteriochlorophyll biosynthesis (light-independent). Its function is as follows. This protein catalyzes the penultimate step in bacteriochlorophyll a biosynthesis. This is 2-desacetyl-2-hydroxyethyl bacteriochlorophyllide A dehydrogenase (bchC) from Cereibacter sphaeroides (strain ATCC 17023 / DSM 158 / JCM 6121 / CCUG 31486 / LMG 2827 / NBRC 12203 / NCIMB 8253 / ATH 2.4.1.) (Rhodobacter sphaeroides).